Here is a 123-residue protein sequence, read N- to C-terminus: Loki profilin-3 (123 aa).

This sequence belongs to the Asgard profilin family.

The protein resides in the cytoplasm. It is found in the cytoskeleton. Binds to actin and affects the structure of the cytoskeleton. At high concentrations inhibits spontaneous rabbit actin nucleation. This strongly suggests this archaea has a profilin-regulated actin system, and actin-type genes can be identified in this organism. The polypeptide is Loki profilin-3 (Lokiarchaeum sp. (strain GC14_75)).